Here is a 497-residue protein sequence, read N- to C-terminus: UPF0371 protein DIP2346 (497 aa).

The protein belongs to the UPF0371 family.

The sequence is that of UPF0371 protein DIP2346 from Corynebacterium diphtheriae (strain ATCC 700971 / NCTC 13129 / Biotype gravis).